The primary structure comprises 455 residues: Gamma-aminobutyric acid receptor subunit alpha-1 (455 aa).

A signal peptide spans 1 to 27 (MKKSRGLSDYLWAWTLILSTLSGRSYG). Residues 28-252 (QPSQDELKDN…FHLKRKIGYF (225 aa)) are Extracellular-facing. Residue Asn-37 is glycosylated (N-linked (GlcNAc...) asparagine). Arg-93 serves as a coordination point for 4-aminobutanoate. Asn-137 carries an N-linked (GlcNAc...) asparagine glycan. Residue Thr-156 participates in 4-aminobutanoate binding. Cys-165 and Cys-179 form a disulfide bridge. A helical transmembrane segment spans residues 253–273 (VIQTYLPCIMTVILSQVSFWL). Over 274 to 278 (NRESV) the chain is Cytoplasmic. A helical membrane pass occupies residues 279–300 (PARTVFGVTTVLTMTTLSISAR). Topologically, residues 301 to 310 (NSLPKVAYAT) are extracellular. The helical transmembrane segment at 311 to 332 (AMDWFIAVCYAFVFSALIEFAT) threads the bilayer. At 333 to 420 (VNYFTKRGYA…TFNSVSKIDR (88 aa)) the chain is on the cytoplasmic side. The chain crosses the membrane as a helical span at residues 421–440 (LSRIAFPLLFGIFNLVYWAT). Topologically, residues 441 to 455 (YLNREPQLKAPTPHQ) are extracellular.

This sequence belongs to the ligand-gated ion channel (TC 1.A.9) family. Gamma-aminobutyric acid receptor (TC 1.A.9.5) subfamily. GABRA1 sub-subfamily. In terms of assembly, heteropentamer, formed by a combination of alpha (GABRA1-6), beta (GABRB1-3), gamma (GABRG1-3), delta (GABRD), epsilon (GABRE), rho (GABRR1-3), pi (GABRP) and theta (GABRQ) subunits, each subunit exhibiting distinct physiological and pharmacological properties. Interacts with UBQLN1. Interacts with TRAK1. Interacts with KIF21B. Identified in a complex of 720 kDa composed of LHFPL4, NLGN2, GABRA1, GABRB2, GABRG2 and GABRB3. Interacts with LHFPL4. Interacts with NLGN2. Interacts with SHISA7; interaction leads to the regulation of GABA(A) receptor trafficking, channel deactivation kinetics and pharmacology. Post-translationally, glycosylated. As to expression, expressed in the cerebellum.

The protein resides in the postsynaptic cell membrane. The protein localises to the cell membrane. Its subcellular location is the cytoplasmic vesicle membrane. The enzyme catalyses chloride(in) = chloride(out). With respect to regulation, allosterically activated by benzodiazepines, the neuroanesthetic alphaxalone and pentobarbital. Inhibited by the antagonist bicuculline. Potentiated by histamine. Functionally, alpha subunit of the heteropentameric ligand-gated chloride channel gated by Gamma-aminobutyric acid (GABA), a major inhibitory neurotransmitter in the brain. GABA-gated chloride channels, also named GABA(A) receptors (GABAAR), consist of five subunits arranged around a central pore and contain GABA active binding site(s) located at the alpha and beta subunit interface(s). When activated by GABA, GABAARs selectively allow the flow of chloride anions across the cell membrane down their electrochemical gradient. Alpha-1/GABRA1-containing GABAARs are largely synaptic. Chloride influx into the postsynaptic neuron following GABAAR opening decreases the neuron ability to generate a new action potential, thereby reducing nerve transmission. GABAARs containing alpha-1 and beta-2 or -3 subunits exhibit synaptogenic activity; the gamma-2 subunit being necessary but not sufficient to induce rapid synaptic contacts formation. GABAARs function also as histamine receptor where histamine binds at the interface of two neighboring beta subunits and potentiates GABA response. GABAARs containing alpha, beta and epsilon subunits also permit spontaneous chloride channel activity while preserving the structural information required for GABA-gated openings. Alpha-1-mediated plasticity in the orbitofrontal cortex regulates context-dependent action selection. Together with rho subunits, may also control neuronal and glial GABAergic transmission in the cerebellum. The sequence is that of Gamma-aminobutyric acid receptor subunit alpha-1 from Mus musculus (Mouse).